A 197-amino-acid polypeptide reads, in one-letter code: MDTVELKAIIEALLFAAPGPVRLEQLALAADADPARVAPLLAELETEYLRAGRGFVLVELAEGYQLRTRPEHAEWVRRLHSSRPTRLSRAALEALAIIAYQQPVTRADIDYLRGVDSGGVVKSLLDKRLVRIVGKKDVPGRPLLYGTSREFLEFFGLRSLSDLPTLKEFTELTKESESLLFDFDAGAGGATASSEQA.

This sequence belongs to the ScpB family. Homodimer. Homodimerization may be required to stabilize the binding of ScpA to the Smc head domains. Component of a cohesin-like complex composed of ScpA, ScpB and the Smc homodimer, in which ScpA and ScpB bind to the head domain of Smc. The presence of the three proteins is required for the association of the complex with DNA.

It localises to the cytoplasm. Participates in chromosomal partition during cell division. May act via the formation of a condensin-like complex containing Smc and ScpA that pull DNA away from mid-cell into both cell halves. This is Segregation and condensation protein B from Syntrophotalea carbinolica (strain DSM 2380 / NBRC 103641 / GraBd1) (Pelobacter carbinolicus).